We begin with the raw amino-acid sequence, 155 residues long: Ribosome maturation factor RimP (155 aa).

It belongs to the RimP family.

The protein resides in the cytoplasm. In terms of biological role, required for maturation of 30S ribosomal subunits. This is Ribosome maturation factor RimP from Staphylococcus epidermidis (strain ATCC 35984 / DSM 28319 / BCRC 17069 / CCUG 31568 / BM 3577 / RP62A).